A 387-amino-acid chain; its full sequence is 1,3-propanediol dehydrogenase (387 aa).

It belongs to the iron-containing alcohol dehydrogenase family. As to quaternary structure, homooctamer. The cofactor is Fe cation.

It carries out the reaction propane-1,3-diol + NAD(+) = 3-hydroxypropanal + NADH + H(+). Inhibited by the metal chelator 1,10-phenanthroline. In terms of biological role, catalyzes the reduction of 3-hydroxypropanal. Is considerably less active with glyceraldehyde, propionaldehyde, acetaldehyde, and butyraldehyde. Also catalyzes the oxidation of various primary, secondary, and tertiary alcohols. Is most active with substrates containing two primary alcohol groups separated by one or two carbon atoms. 1,3-propanediol is the preferred substrate. This is 1,3-propanediol dehydrogenase from Citrobacter freundii.